We begin with the raw amino-acid sequence, 806 residues long: Facilitated trehalose transporter Tret1 (806 aa).

2 disordered regions span residues 1–34 (MFGNEMDDTRDPLQYGYQRVNTGEGSLSTSTTGT) and 48–138 (LNST…HKNQ). Topologically, residues 1-339 (MFGNEMDDTR…LEVYRPTTNP (339 aa)) are cytoplasmic. Low complexity predominate over residues 25 to 34 (GSLSTSTTGT). The helical transmembrane segment at 340–360 (IFIWTQVLAALSVSLGSMVVG) threads the bilayer. Over 361 to 389 (FSSAYTSPALVSMKDRNITSFEVTDQSGS) the chain is Extracellular. Asparagine 377 carries an N-linked (GlcNAc...) asparagine glycan. The helical transmembrane segment at 390-410 (WVGGIMPLAGLAGGILGGPLI) threads the bilayer. The Cytoplasmic segment spans residues 411 to 424 (EYLGRKNTILATAT). A helical membrane pass occupies residues 425–445 (PFIISWLLIACATHVAMVLVG). Topologically, residues 446-447 (RA) are extracellular. The helical transmembrane segment at 448–468 (LSGFSVGVASLSLPVYLGETV) threads the bilayer. Topologically, residues 469-473 (QPEVR) are cytoplasmic. The helical transmembrane segment at 474 to 494 (GTLGLLPTAFGNIGILLCFVA) threads the bilayer. At 495–501 (GKYMDWS) the chain is on the extracellular side. Residues 502–522 (GLAFLGAALPIPFLLLMFLIP) traverse the membrane as a helical segment. The Cytoplasmic segment spans residues 523–585 (ETPRWYVSRG…DLMKKANLKP (63 aa)). A helical transmembrane segment spans residues 586 to 606 (LLISLGLMFFQQLSGINAVIF). Residues 607–622 (YTVQIFQDAGSTIDEN) lie on the Extracellular side of the membrane. The helical transmembrane segment at 623-643 (LCTIIVGVVNFIATFIATMLI) threads the bilayer. The Cytoplasmic portion of the chain corresponds to 644–649 (DRLGRK). A helical transmembrane segment spans residues 650–670 (MLLYISDVAMIITLMTLGGFF). The Extracellular segment spans residues 671–681 (YVKNSGQDVSQ). Residues 682 to 702 (VGWLPLAAFVIYVLGFSLGFG) form a helical membrane-spanning segment. The Cytoplasmic segment spans residues 703–723 (PIPWLMMGEILPGKIRGSAAS). Residues 724-744 (VATAFNWSCTFIVTKTFADII) form a helical membrane-spanning segment. Over 745 to 750 (NAIGTH) the chain is Extracellular. A helical membrane pass occupies residues 751–771 (GTFWMFGSICVIGLAFVIFYV). Residues 772–806 (PETQGKSLEDIERKMMGRVRRMSSVANIKPLSFNM) lie on the Cytoplasmic side of the membrane.

Belongs to the major facilitator superfamily. Sugar transporter (TC 2.A.1.1) family. Trehalose transporter subfamily.

It is found in the cell membrane. Functionally, high-capacity facilitative transporter for trehalose. Does not transport maltose, sucrose or lactose. Mediates the bidirectional transfer of trehalose. Responsible for the transport of trehalose synthesized in the fat body and the incorporation of trehalose into other tissues that require a carbon source, thereby regulating trehalose levels in the hemolymph. This chain is Facilitated trehalose transporter Tret1, found in Aedes aegypti (Yellowfever mosquito).